Consider the following 265-residue polypeptide: Small ribosomal subunit protein eS4 (265 aa).

Residues 42–104 form the S4 RNA-binding domain; sequence LPLILIIRNR…TNENYRLLYD (63 aa).

Belongs to the eukaryotic ribosomal protein eS4 family.

The protein localises to the cytoplasm. This is Small ribosomal subunit protein eS4 (RPS4) from Zea mays (Maize).